Consider the following 47-residue polypeptide: Lysis protein for colicin E5 (47 aa).

Positions 1-19 (MKKITWIILLLLAAIILAA) are cleaved as a signal peptide. Cys-20 carries N-palmitoyl cysteine lipidation. A lipid anchor (S-diacylglycerol cysteine) is attached at Cys-20.

The protein resides in the cell outer membrane. In terms of biological role, lysis proteins are required for both colicin release and partial cell lysis. This is Lysis protein for colicin E5 (lys) from Escherichia coli.